A 235-amino-acid polypeptide reads, in one-letter code: N-alpha-acetyltransferase 10 (235 aa).

M1 is modified (N-acetylmethionine). The interaction with NAA15 stretch occupies residues M1–A58. The region spanning M1 to T152 is the N-acetyltransferase domain. K136 is modified (N6-acetyllysine; by autocatalysis). Positions E196 to S213 are enriched in basic and acidic residues. Positions E196–S235 are disordered. S205 bears the Phosphoserine mark. S209 bears the Phosphoserine; by IKKB mark. A phosphoserine mark is found at S213 and S216.

This sequence belongs to the acetyltransferase family. ARD1 subfamily. Component of the N-terminal acetyltransferase A complex (also called the NatA complex) composed of NAA10 and NAA15. Interacts with NAA15. Component of the N-terminal acetyltransferase A (NatA)/HYPK complex at least composed of NAA10, NAA15 and HYPK, which has N-terminal acetyltransferase activity. In complex with NAA15, interacts with HYPK. Component of the N-terminal acetyltransferase E (NatE) complex at least composed of NAA10, NAA15 and NAA50. Within the complex interacts with NAA15; the interaction is required for binding to NAAT50. Interacts with NAAT50. The interaction of the NatA complex with NAA50 reduces the acetylation activity of the NatA complex. Component of the N-terminal acetyltransferase E (NatE)/HYPK complex at least composed of NAA10, NAA15, NAA50 and HYPK. In complex with NAA15, interacts with HYPK; the interaction with HYPK reduces the capacity of the NatA complex to interact with NAA50. Interacts with HIF1A (via its ODD domain); the interaction increases HIF1A protein stability during normoxia, an down-regulates it when induced by hypoxia. Interacts with the ribosome. Binds to MYLK. Interacts with NAA16. Interacts (via its C-terminal domain) with TSC2, leading to its acetylation. Interacts with IKBKB. Interacts with HSPA1A and HSPA1B leading to its acetylation. Cleaved by caspases during apoptosis. In terms of processing, phosphorylation by IKBKB/IKKB at Ser-209 destabilises NAA10 and promotes its proteasome-mediated degradation. Post-translationally, autoacetylated at Lys-136 which stimulates its catalytic activity. In terms of tissue distribution, ubiquitous.

It localises to the cytoplasm. The protein localises to the nucleus. It carries out the reaction N-terminal glycyl-[protein] + acetyl-CoA = N-terminal N(alpha)-acetylglycyl-[protein] + CoA + H(+). The catalysed reaction is N-terminal L-alanyl-[protein] + acetyl-CoA = N-terminal N(alpha)-acetyl-L-alanyl-[protein] + CoA + H(+). The enzyme catalyses N-terminal L-seryl-[protein] + acetyl-CoA = N-terminal N(alpha)-acetyl-L-seryl-[protein] + CoA + H(+). It catalyses the reaction N-terminal L-valyl-[protein] + acetyl-CoA = N-terminal N(alpha)-acetyl-L-valyl-[protein] + CoA + H(+). It carries out the reaction N-terminal L-cysteinyl-[protein] + acetyl-CoA = N-terminal N(alpha)-acetyl-L-cysteinyl-[protein] + CoA + H(+). The catalysed reaction is N-terminal L-threonyl-[protein] + acetyl-CoA = N-terminal N(alpha)-acetyl-L-threonyl-[protein] + CoA + H(+). In terms of biological role, catalytic subunit of the N-terminal acetyltransferase A (NatA) complex which displays alpha (N-terminal) acetyltransferase activity. Acetylates amino termini that are devoid of initiator methionine. The alpha (N-terminal) acetyltransferase activity may be important for vascular, hematopoietic and neuronal growth and development. Without NAA15, displays epsilon (internal) acetyltransferase activity towards HIF1A, thereby promoting its degradation. Represses MYLK kinase activity by acetylation, and thus represses tumor cell migration. Acetylates, and stabilizes TSC2, thereby repressing mTOR activity and suppressing cancer development. Acetylates HSPA1A and HSPA1B at 'Lys-77' which enhances its chaperone activity and leads to preferential binding to co-chaperone HOPX. Acetylates HIST1H4A. Acts as a negative regulator of sister chromatid cohesion during mitosis. The chain is N-alpha-acetyltransferase 10 (Naa10) from Mus musculus (Mouse).